Reading from the N-terminus, the 526-residue chain is Peptide chain release factor 3 (526 aa).

Positions 9–277 constitute a tr-type G domain; the sequence is ERRRTFAIIS…AFAEYAPPPQ (269 aa). GTP-binding positions include 18–25, 86–90, and 140–143; these read SHPDAGKT, DTPGH, and NKLD.

This sequence belongs to the TRAFAC class translation factor GTPase superfamily. Classic translation factor GTPase family. PrfC subfamily.

It is found in the cytoplasm. Functionally, increases the formation of ribosomal termination complexes and stimulates activities of RF-1 and RF-2. It binds guanine nucleotides and has strong preference for UGA stop codons. It may interact directly with the ribosome. The stimulation of RF-1 and RF-2 is significantly reduced by GTP and GDP, but not by GMP. The protein is Peptide chain release factor 3 of Methylococcus capsulatus (strain ATCC 33009 / NCIMB 11132 / Bath).